An 80-amino-acid polypeptide reads, in one-letter code: uncharacterized protein (80 aa).

This is an uncharacterized protein from Bacillus subtilis (strain 168).